Consider the following 263-residue polypeptide: Ribosomal RNA small subunit methyltransferase J (263 aa).

S-adenosyl-L-methionine contacts are provided by residues 115–116 (RD), 131–132 (ER), and aspartate 181.

The protein belongs to the methyltransferase superfamily. RsmJ family.

It is found in the cytoplasm. The enzyme catalyses guanosine(1516) in 16S rRNA + S-adenosyl-L-methionine = N(2)-methylguanosine(1516) in 16S rRNA + S-adenosyl-L-homocysteine + H(+). Its function is as follows. Specifically methylates the guanosine in position 1516 of 16S rRNA. The protein is Ribosomal RNA small subunit methyltransferase J of Hahella chejuensis (strain KCTC 2396).